We begin with the raw amino-acid sequence, 160 residues long: Photosystem II extrinsic protein V (160 aa).

A signal peptide spans methionine 1 to alanine 25. Heme c contacts are provided by cysteine 62, cysteine 65, histidine 66, and histidine 117.

Belongs to the cytochrome c family. PsbV subfamily. As to quaternary structure, PSII is composed of 1 copy each of membrane proteins PsbA, PsbB, PsbC, PsbD, PsbE, PsbF, PsbH, PsbI, PsbJ, PsbK, PsbL, PsbM, PsbT, PsbX, PsbY, PsbZ, Psb30/Ycf12, peripheral proteins PsbO, CyanoQ (PsbQ), PsbU, PsbV and a large number of cofactors. It forms dimeric complexes. The cyanobacterial oxygen-evolving complex is composed of PsbO, CyanoQ (PsbQ), PsbV and PsbU. Heme c is required as a cofactor.

The protein resides in the cellular thylakoid membrane. In terms of biological role, one of the extrinsic, lumenal subunits of photosystem II (PSII). PSII is a light-driven water plastoquinone oxidoreductase, using light energy to abstract electrons from H(2)O, generating a proton gradient subsequently used for ATP formation. The extrinsic proteins stabilize the structure of photosystem II oxygen-evolving complex (OEC), the ion environment of oxygen evolution and protect the OEC against heat-induced inactivation. Low-potential cytochrome c that plays a role in the OEC of PSII, required for normal function or stabilization of PSII. This is Photosystem II extrinsic protein V from Synechocystis sp. (strain ATCC 27184 / PCC 6803 / Kazusa).